The chain runs to 495 residues: Potassium voltage-gated channel subfamily A member 1 (495 aa).

The tract at residues 1–30 (MTVMSGENADEASAAPGHPQDGSYPRQADH) is disordered. Residues 1–128 (MTVMSGENAD…FYELGEEAME (128 aa)) are tetramerization domain. Topologically, residues 1–164 (MTVMSGENAD…LLFEYPESSG (164 aa)) are cytoplasmic. Phosphoserine is present on Ser-23. The chain crosses the membrane as a helical span at residues 165–186 (PARVIAIVSVMVILISIVIFCL). The Extracellular segment spans residues 187-220 (ETLPELKDDKDFTGTIHRIDNTTVIYTSNIFTDP). Residue Asn-207 is glycosylated (N-linked (GlcNAc...) asparagine). A helical membrane pass occupies residues 221–242 (FFIVETLCIIWFSFELVVRFFA). Cys-243 carries the S-palmitoyl cysteine lipid modification. The Cytoplasmic portion of the chain corresponds to 243–253 (CPSKTDFFKNI). The chain crosses the membrane as a helical span at residues 254-274 (MNFIDIVAIIPYFITLGTEIA). Topologically, residues 275–287 (EQEGNQKGEQATS) are extracellular. A helical; Voltage-sensor membrane pass occupies residues 288–308 (LAILRVIRLVRVFRIFKLSRH). Residues 309–323 (SKGLQILGQTLKASM) are Cytoplasmic-facing. Positions 310 to 323 (KGLQILGQTLKASM) are S4-S5 linker. Position 322 is a phosphoserine; by PKA (Ser-322). Residues 324–345 (RELGLLIFFLFIGVILFSSAVY) traverse the membrane as a helical segment. Over 346–359 (FAEAEEAESHFSSI) the chain is Extracellular. The segment at residues 360–371 (PDAFWWAVVSMT) is an intramembrane region (helical). The short motif at 372-377 (TVGYGD) is the Selectivity filter element. The stretch at 372–379 (TVGYGDMY) is an intramembrane region. At 380 to 386 (PVTIGGK) the chain is on the extracellular side. A helical membrane pass occupies residues 387 to 415 (IVGSLCAIAGVLTIALPVPVIVSNFNYFY). Over 416–495 (HRETEGEEQA…VNKSKLLTDV (80 aa)) the chain is Cytoplasmic. A phosphoserine mark is found at Ser-437 and Ser-439. Phosphoserine; by PKA is present on Ser-446. The short motif at 493–495 (TDV) is the PDZ-binding element.

Belongs to the potassium channel family. A (Shaker) (TC 1.A.1.2) subfamily. Kv1.1/KCNA1 sub-subfamily. As to quaternary structure, homotetramer and heterotetramer with other channel-forming alpha subunits, such as KCNA2, KCNA4, KCNA5, KCNA6 and KCNA7. Channel activity is regulated by interaction with the beta subunits KCNAB1 and KCNAB2. Identified in a complex with KCNA2 and KCNAB2. Interacts (via C-terminus) with the PDZ domains of DLG1, DLG2 and DLG4. Interacts with LGI1 within a complex containing LGI1, KCNA4 and KCNAB1. Interacts (via cytoplasmic N-terminal domain) with KCNRG; this inhibits channel activity. Interacts with ANK3; this inhibits channel activity. Interacts (via N-terminus) with STX1A; this promotes channel inactivation. Interacts (via N-terminus) with the heterodimer formed by GNB1 and GNG2; this promotes channel inactivation. Can interact simultaneously with STX1A and the heterodimer formed by GNB1 and GNG2. Interacts with ADAM11. In terms of processing, palmitoylated on Cys-243; which may be required for membrane targeting. N-glycosylated. Post-translationally, phosphorylated on tyrosine residues. Phosphorylation increases in response to NRG1; this inhibits channel activity. Phosphorylated by PKA. Phosphorylation at Ser-446 regulates channel activity by down-regulating expression at the cell membrane. Detected in hippocampus, in the middle third of the molecular layer of the dentate gyrus and in stratum radiatum and stratum oriens. Detected in the mossy fiber zone in the hippocampus CA3 region, at or near axon terminals. Detected in brain cortex, at basket cell terminals. Detected adjacent to nodes of Ranvier in juxtaparanodal zones in spinal cord nerve fibers, but also in paranodal regions in some myelinated spinal cord axons. Detected in juxtaparanodal regions adjacent to the nodes of Ranvier in myelinated axons in cerebellar white matter. Detected in sensory neurons. Detected in neurons from the medial nucleus of the trapezoid body. Detected in basolateral amygdala. Detected in the paraventricular nucleus of the hypothalamus. Detected in the islet of Langerhans (at protein level).

The protein resides in the cell membrane. It localises to the membrane. Its subcellular location is the cell projection. The protein localises to the axon. It is found in the cytoplasmic vesicle. The protein resides in the perikaryon. It localises to the endoplasmic reticulum. Its subcellular location is the dendrite. The protein localises to the cell junction. It is found in the synapse. The protein resides in the presynapse. It localises to the presynaptic cell membrane. The enzyme catalyses K(+)(in) = K(+)(out). With respect to regulation, inhibited by 4-aminopyridine (4-AP) and by tetraethylammonium (TEA). Inhibited by kaliotoxin (KTX). Its function is as follows. Voltage-gated potassium channel that mediates transmembrane potassium transport in excitable membranes, primarily in the brain and the central nervous system, but also in the kidney. Contributes to the regulation of the membrane potential and nerve signaling, and prevents neuronal hyperexcitability. Forms tetrameric potassium-selective channels through which potassium ions pass in accordance with their electrochemical gradient. The channel alternates between opened and closed conformations in response to the voltage difference across the membrane. Can form functional homotetrameric channels and heterotetrameric channels that contain variable proportions of KCNA1, KCNA2, KCNA4, KCNA5, KCNA6, KCNA7, and possibly other family members as well; channel properties depend on the type of alpha subunits that are part of the channel. Channel properties are modulated by cytoplasmic beta subunits that regulate the subcellular location of the alpha subunits and promote rapid inactivation of delayed rectifier potassium channels. In vivo, membranes probably contain a mixture of heteromeric potassium channel complexes, making it difficult to assign currents observed in intact tissues to any particular potassium channel family member. Homotetrameric KCNA1 forms a delayed-rectifier potassium channel that opens in response to membrane depolarization, followed by slow spontaneous channel closure. In contrast, a heterotetrameric channel formed by KCNA1 and KCNA4 shows rapid inactivation. Regulates neuronal excitability in hippocampus, especially in mossy fibers and medial perforant path axons, preventing neuronal hyperexcitability. Response to toxins that are selective for KCNA1, respectively for KCNA2, suggests that heteromeric potassium channels composed of both KCNA1 and KCNA2 play a role in pacemaking and regulate the output of deep cerebellar nuclear neurons. May function as down-stream effector for G protein-coupled receptors and inhibit GABAergic inputs to basolateral amygdala neurons. May contribute to the regulation of neurotransmitter release, such as gamma-aminobutyric acid (GABA) release. Plays a role in regulating the generation of action potentials and preventing hyperexcitability in myelinated axons of the vagus nerve, and thereby contributes to the regulation of heart contraction. Required for normal neuromuscular responses. Regulates the frequency of neuronal action potential firing in response to mechanical stimuli, and plays a role in the perception of pain caused by mechanical stimuli, but does not play a role in the perception of pain due to heat stimuli. Required for normal responses to auditory stimuli and precise location of sound sources, but not for sound perception. The use of toxins that block specific channels suggest that it contributes to the regulation of the axonal release of the neurotransmitter dopamine. Required for normal postnatal brain development and normal proliferation of neuronal precursor cells in the brain. Plays a role in the reabsorption of Mg(2+) in the distal convoluted tubules in the kidney and in magnesium ion homeostasis, probably via its effect on the membrane potential. This chain is Potassium voltage-gated channel subfamily A member 1, found in Rattus norvegicus (Rat).